Reading from the N-terminus, the 209-residue chain is Large ribosomal subunit protein uL3 (209 aa).

The disordered stretch occupies residues 128–166; that stretch reads FGGGSRTHGQSDRLRAPGSVGGSSDPSRTFKGTRMAGRM.

It belongs to the universal ribosomal protein uL3 family. Part of the 50S ribosomal subunit. Forms a cluster with proteins L14 and L19.

In terms of biological role, one of the primary rRNA binding proteins, it binds directly near the 3'-end of the 23S rRNA, where it nucleates assembly of the 50S subunit. The chain is Large ribosomal subunit protein uL3 from Chlorobaculum parvum (strain DSM 263 / NCIMB 8327) (Chlorobium vibrioforme subsp. thiosulfatophilum).